We begin with the raw amino-acid sequence, 164 residues long: Crossover junction endodeoxyribonuclease RuvC (164 aa).

Active-site residues include Asp7, Glu67, and Asp140. Positions 7, 67, and 140 each coordinate Mg(2+).

The protein belongs to the RuvC family. Homodimer which binds Holliday junction (HJ) DNA. The HJ becomes 2-fold symmetrical on binding to RuvC with unstacked arms; it has a different conformation from HJ DNA in complex with RuvA. In the full resolvosome a probable DNA-RuvA(4)-RuvB(12)-RuvC(2) complex forms which resolves the HJ. Mg(2+) is required as a cofactor.

It localises to the cytoplasm. It catalyses the reaction Endonucleolytic cleavage at a junction such as a reciprocal single-stranded crossover between two homologous DNA duplexes (Holliday junction).. The RuvA-RuvB-RuvC complex processes Holliday junction (HJ) DNA during genetic recombination and DNA repair. Endonuclease that resolves HJ intermediates. Cleaves cruciform DNA by making single-stranded nicks across the HJ at symmetrical positions within the homologous arms, yielding a 5'-phosphate and a 3'-hydroxyl group; requires a central core of homology in the junction. The consensus cleavage sequence is 5'-(A/T)TT(C/G)-3'. Cleavage occurs on the 3'-side of the TT dinucleotide at the point of strand exchange. HJ branch migration catalyzed by RuvA-RuvB allows RuvC to scan DNA until it finds its consensus sequence, where it cleaves and resolves the cruciform DNA. This is Crossover junction endodeoxyribonuclease RuvC from Alkaliphilus oremlandii (strain OhILAs) (Clostridium oremlandii (strain OhILAs)).